Here is a 425-residue protein sequence, read N- to C-terminus: Dihydroorotase (425 aa).

Residues histidine 56 and histidine 58 each coordinate Zn(2+). Residues 58–60 (HYR) and asparagine 90 each bind substrate. Residues aspartate 148, histidine 175, and histidine 228 each coordinate Zn(2+). Asparagine 274 provides a ligand contact to substrate. Position 301 (aspartate 301) interacts with Zn(2+). The active site involves aspartate 301. Residues histidine 305 and 319-320 (FG) each bind substrate.

Belongs to the metallo-dependent hydrolases superfamily. DHOase family. Class I DHOase subfamily. Zn(2+) is required as a cofactor.

It catalyses the reaction (S)-dihydroorotate + H2O = N-carbamoyl-L-aspartate + H(+). It participates in pyrimidine metabolism; UMP biosynthesis via de novo pathway; (S)-dihydroorotate from bicarbonate: step 3/3. Catalyzes the reversible cyclization of carbamoyl aspartate to dihydroorotate. The polypeptide is Dihydroorotase (Lactobacillus delbrueckii subsp. bulgaricus (strain ATCC BAA-365 / Lb-18)).